Reading from the N-terminus, the 180-residue chain is ATP-dependent protease subunit HslV (180 aa).

Residue threonine 8 is part of the active site. Na(+)-binding residues include glycine 165, aspartate 168, and threonine 171.

Belongs to the peptidase T1B family. HslV subfamily. As to quaternary structure, a double ring-shaped homohexamer of HslV is capped on each side by a ring-shaped HslU homohexamer. The assembly of the HslU/HslV complex is dependent on binding of ATP.

The protein localises to the cytoplasm. It catalyses the reaction ATP-dependent cleavage of peptide bonds with broad specificity.. Allosterically activated by HslU binding. Functionally, protease subunit of a proteasome-like degradation complex believed to be a general protein degrading machinery. The polypeptide is ATP-dependent protease subunit HslV (Lactiplantibacillus plantarum (strain ATCC BAA-793 / NCIMB 8826 / WCFS1) (Lactobacillus plantarum)).